The sequence spans 37 residues: NAD-reducing hydrogenase HoxS subunit alpha (37 aa).

Belongs to the complex I 51 kDa subunit family. As to quaternary structure, tetramer of an alpha and a gamma subunits (flavin-containing dimer), and a delta and a nickel-containing beta subunits (hydrogenase dimer). It depends on FMN as a cofactor. [4Fe-4S] cluster is required as a cofactor.

The protein localises to the cytoplasm. The enzyme catalyses H2 + NAD(+) = NADH + H(+). Functionally, subunits alpha and gamma of HoxS constitute an NADH--oxidoreductase. The sequence is that of NAD-reducing hydrogenase HoxS subunit alpha (hoxF) from Rhodococcus opacus (Nocardia opaca).